Consider the following 429-residue polypeptide: MAATDLERVSNAEPEPRSLSLGGHVGFDSLPDQLVSKSVTQGFSFNILCVGETGIGKSTLMNTLFNTTFETEEASHHEECVRLRPQTYDLQESNVHLKLTIVDAVGFGDQINKDDSYRPIVDYIDAQFENYLQEELKIRRSLFDYHDTRIHVCLYFITPTGHSLKSLDLVTMKKLDSKVNIIPIIAKADTISKSELHKFKIKIMGELVSNGVQIYQFPTDDEAVAEINAVMNAHLPFAVVGSTEEVKVGNKLVRARQYPWGVVQVENENHCDFVKLREMLIRVNMEDLREQTHSRHYELYRRCKLEEMGFQDSDGDSQPFSLQETYEAKRKEFLSELQRKEEEMRQMFVNKVKETELELKEKERELHEKFEHLKRIHQEEKRKVEEKRRELEEETNAFNCRKAAMEALQSQALHATSQQPLRKDKDKKN.

The span at 1 to 16 shows a compositional bias: basic and acidic residues; sequence MAATDLERVSNAEPEP. The disordered stretch occupies residues 1 to 23; that stretch reads MAATDLERVSNAEPEPRSLSLGG. At A2 the chain carries N-acetylalanine. S10 bears the Phosphoserine mark. One can recognise a Septin-type G domain in the interval 41-307; the sequence is QGFSFNILCV…ELYRRCKLEE (267 aa). The segment at 51–58 is G1 motif; it reads GETGIGKS. GTP contacts are provided by residues 51 to 58, G106, 187 to 195, G241, and R256; these read GETGIGKS and KADTISKSE. The tract at residues 103-106 is G3 motif; the sequence is DAVG. Positions 186 to 189 are G4 motif; sequence AKAD. A coiled-coil region spans residues 320 to 412; sequence FSLQETYEAK…AAMEALQSQA (93 aa). Residues 409–420 show a composition bias toward polar residues; the sequence is QSQALHATSQQP. The disordered stretch occupies residues 409–429; sequence QSQALHATSQQPLRKDKDKKN.

It belongs to the TRAFAC class TrmE-Era-EngA-EngB-Septin-like GTPase superfamily. Septin GTPase family. As to quaternary structure, septins polymerize into heterooligomeric protein complexes that form filaments, and can associate with cellular membranes, actin filaments and microtubules. GTPase activity is required for filament formation. Interacts with SEPTIN5. Interacts with CDK14, SEPTIN4 and SEPTIN7. Interacts with VAMP2; the interaction inhibits interaction of VAMP2 with SYP. Interacts with STX1A.

The protein localises to the cytoplasm. Its subcellular location is the cytoskeleton. It localises to the synapse. It is found in the cell projection. The protein resides in the axon. The protein localises to the cytoplasmic vesicle. Its subcellular location is the secretory vesicle. It localises to the synaptic vesicle membrane. It is found in the presynapse. Functionally, filament-forming cytoskeletal GTPase. May play a role in platelet secretion. Seems to participate in the process of SNARE complex formation in synaptic vesicles. This Mus musculus (Mouse) protein is Septin-8.